The sequence spans 193 residues: Probable nicotinate-nucleotide adenylyltransferase (193 aa).

Belongs to the NadD family.

It carries out the reaction nicotinate beta-D-ribonucleotide + ATP + H(+) = deamido-NAD(+) + diphosphate. It functions in the pathway cofactor biosynthesis; NAD(+) biosynthesis; deamido-NAD(+) from nicotinate D-ribonucleotide: step 1/1. Catalyzes the reversible adenylation of nicotinate mononucleotide (NaMN) to nicotinic acid adenine dinucleotide (NaAD). The sequence is that of Probable nicotinate-nucleotide adenylyltransferase from Flavobacterium psychrophilum (strain ATCC 49511 / DSM 21280 / CIP 103535 / JIP02/86).